A 198-amino-acid chain; its full sequence is Probable chorismate pyruvate-lyase (198 aa).

Arg-76, Leu-114, and Glu-172 together coordinate substrate.

Belongs to the UbiC family.

Its subcellular location is the cytoplasm. It carries out the reaction chorismate = 4-hydroxybenzoate + pyruvate. It functions in the pathway cofactor biosynthesis; ubiquinone biosynthesis. In terms of biological role, removes the pyruvyl group from chorismate, with concomitant aromatization of the ring, to provide 4-hydroxybenzoate (4HB) for the ubiquinone pathway. The protein is Probable chorismate pyruvate-lyase of Bordetella avium (strain 197N).